Reading from the N-terminus, the 181-residue chain is uncharacterized protein (181 aa).

This is an uncharacterized protein from Homo sapiens (Human).